The primary structure comprises 418 residues: Tyrosine--tRNA ligase 1 (418 aa).

Tyrosine 34 contributes to the L-tyrosine binding site. The short motif at 39–48 is the 'HIGH' region element; it reads PTGDSMHIGH. Residues tyrosine 166 and glutamine 170 each coordinate L-tyrosine. A 'KMSKS' region motif is present at residues 228 to 232; it reads KFGKT. An ATP-binding site is contributed by lysine 231. The S4 RNA-binding domain maps to 350-416; sequence KNIVDWLVDT…GKKNYFLAKV (67 aa).

Belongs to the class-I aminoacyl-tRNA synthetase family. TyrS type 1 subfamily. In terms of assembly, homodimer.

The protein resides in the cytoplasm. The catalysed reaction is tRNA(Tyr) + L-tyrosine + ATP = L-tyrosyl-tRNA(Tyr) + AMP + diphosphate + H(+). Catalyzes the attachment of tyrosine to tRNA(Tyr) in a two-step reaction: tyrosine is first activated by ATP to form Tyr-AMP and then transferred to the acceptor end of tRNA(Tyr). This chain is Tyrosine--tRNA ligase 1, found in Enterococcus faecalis (strain ATCC 700802 / V583).